A 54-amino-acid polypeptide reads, in one-letter code: Large ribosomal subunit protein eL37 (54 aa).

The Zn(2+) site is built by Cys-20, Cys-23, Cys-35, and Cys-38. Residues 20-38 form a C4-type zinc finger; it reads CRRCGHHTYNVRTKRCSHC.

This sequence belongs to the eukaryotic ribosomal protein eL37 family. Zn(2+) is required as a cofactor.

Binds to the 23S rRNA. This Thermoplasma acidophilum (strain ATCC 25905 / DSM 1728 / JCM 9062 / NBRC 15155 / AMRC-C165) protein is Large ribosomal subunit protein eL37 (rpl37e).